Reading from the N-terminus, the 561-residue chain is 4-coumarate--CoA ligase 1 (561 aa).

ATP-binding residues include serine 210, serine 211, glycine 212, threonine 213, threonine 214, and lysine 218. (E)-4-coumaroyl-AMP-binding residues include tyrosine 260 and serine 264. A CoA-binding site is contributed by lysine 281. An SBD1 region spans residues 283–352; sequence EINLLLELIQ…AKFPNAKLGQ (70 aa). Residues alanine 330, glutamine 352, glycine 353, threonine 357, and methionine 365 each contribute to the (E)-4-coumaroyl-AMP site. ATP contacts are provided by glutamine 352, glycine 353, and threonine 357. Positions 353–420 are SBD2; it reads GYGMTEAGPV…IRGHQIMKGY (68 aa). ATP-binding residues include aspartate 441 and arginine 456. (E)-4-coumaroyl-AMP-binding residues include lysine 458 and lysine 462. The CoA site is built by lysine 464 and glycine 465. ATP is bound at residue lysine 547.

The protein belongs to the ATP-dependent AMP-binding enzyme family. It depends on Mg(2+) as a cofactor. Preferentially expressed in roots, bolting stems and siliques. Also detected in leaves.

The enzyme catalyses (E)-4-coumarate + ATP + CoA = (E)-4-coumaroyl-CoA + AMP + diphosphate. It carries out the reaction (E)-caffeate + ATP + CoA = (E)-caffeoyl-CoA + AMP + diphosphate. It catalyses the reaction (E)-ferulate + ATP + CoA = (E)-feruloyl-CoA + AMP + diphosphate. The catalysed reaction is (E)-4-coumarate + ATP + H(+) = (E)-4-coumaroyl-AMP + diphosphate. The enzyme catalyses (E)-4-coumaroyl-AMP + CoA = (E)-4-coumaroyl-CoA + AMP + H(+). It carries out the reaction (E)-caffeate + ATP + H(+) = (E)-caffeoyl-AMP + diphosphate. It catalyses the reaction (E)-caffeoyl-AMP + CoA = (E)-caffeoyl-CoA + AMP + H(+). The catalysed reaction is (E)-ferulate + ATP + H(+) = (E)-feruloyl-AMP + diphosphate. The enzyme catalyses (E)-feruloyl-AMP + CoA = (E)-feruloyl-CoA + AMP + H(+). The protein operates within phytoalexin biosynthesis; 3,4',5-trihydroxystilbene biosynthesis; 3,4',5-trihydroxystilbene from trans-4-coumarate: step 1/2. In terms of biological role, produces CoA thioesters of a variety of hydroxy- and methoxy-substituted cinnamic acids, which are used to synthesize several phenylpropanoid-derived compounds, including anthocyanins, flavonoids, isoflavonoids, coumarins, lignin, suberin and wall-bound phenolics. Follows a two-step reaction mechanism, wherein the carboxylate substrate first undergoes adenylation by ATP, followed by a thioesterification in the presence of CoA to yield the final CoA thioesters. This Arabidopsis thaliana (Mouse-ear cress) protein is 4-coumarate--CoA ligase 1.